The sequence spans 81 residues: ATP synthase subunit c (81 aa).

A run of 2 helical transmembrane segments spans residues Ile5–Gly25 and Val57–Ala77.

The protein belongs to the ATPase C chain family. In terms of assembly, F-type ATPases have 2 components, F(1) - the catalytic core - and F(0) - the membrane proton channel. F(1) has five subunits: alpha(3), beta(3), gamma(1), delta(1), epsilon(1). F(0) has three main subunits: a(1), b(2) and c(10-14). The alpha and beta chains form an alternating ring which encloses part of the gamma chain. F(1) is attached to F(0) by a central stalk formed by the gamma and epsilon chains, while a peripheral stalk is formed by the delta and b chains.

It is found in the cell membrane. Functionally, f(1)F(0) ATP synthase produces ATP from ADP in the presence of a proton or sodium gradient. F-type ATPases consist of two structural domains, F(1) containing the extramembraneous catalytic core and F(0) containing the membrane proton channel, linked together by a central stalk and a peripheral stalk. During catalysis, ATP synthesis in the catalytic domain of F(1) is coupled via a rotary mechanism of the central stalk subunits to proton translocation. Key component of the F(0) channel; it plays a direct role in translocation across the membrane. A homomeric c-ring of between 10-14 subunits forms the central stalk rotor element with the F(1) delta and epsilon subunits. The protein is ATP synthase subunit c of Mycobacterium marinum (strain ATCC BAA-535 / M).